We begin with the raw amino-acid sequence, 695 residues long: Probable serine/threonine-protein kinase abkD (695 aa).

Polar residues predominate over residues 105–119; sequence TTKPQPCQAKPPSSK. The disordered stretch occupies residues 105–149; it reads TTKPQPCQAKPPSSKQQQQQQQQQQQQQQQQQQQQSKKKTSKDRL. The stretch at 118–150 forms a coiled coil; that stretch reads SKQQQQQQQQQQQQQQQQQQQQSKKKTSKDRLR. A compositionally biased stretch (low complexity) spans 120–139; sequence QQQQQQQQQQQQQQQQQQQQ. Residues 177–193 traverse the membrane as a helical segment; it reads TIASILAAIALIIYSYE. The Protein kinase domain maps to 317–695; sequence DFDRLPIAAA…LIKDQMKKLG (379 aa). Residues 323 to 331 and Lys345 each bind ATP; that span reads IAAASLAQV. The active-site Proton acceptor is Asp477.

This sequence belongs to the protein kinase superfamily. ADCK protein kinase family.

It localises to the membrane. In Dictyostelium discoideum (Social amoeba), this protein is Probable serine/threonine-protein kinase abkD (abkD).